Here is a 92-residue protein sequence, read N- to C-terminus: Small ribosomal subunit protein uS19c (92 aa).

The protein belongs to the universal ribosomal protein uS19 family.

It is found in the plastid. The protein localises to the chloroplast. Protein S19 forms a complex with S13 that binds strongly to the 16S ribosomal RNA. The chain is Small ribosomal subunit protein uS19c from Oedogonium cardiacum (Filamentous green alga).